Reading from the N-terminus, the 237-residue chain is Small ribosomal subunit protein eS4 (237 aa).

Positions 38 to 110 (LPLAVVVRDV…EAKYYDLKPI (73 aa)) constitute an S4 RNA-binding domain.

This sequence belongs to the eukaryotic ribosomal protein eS4 family.

This is Small ribosomal subunit protein eS4 from Pyrobaculum calidifontis (strain DSM 21063 / JCM 11548 / VA1).